We begin with the raw amino-acid sequence, 315 residues long: ATP synthase gamma chain (315 aa).

F-type ATPases have 2 components, CF(1) - the catalytic core - and CF(0) - the membrane proton channel. CF(1) has five subunits: alpha(3), beta(3), gamma(1), delta(1), epsilon(1). CF(0) has four main subunits: a(1), b(1), b'(1) and c(9-12).

Its subcellular location is the cellular thylakoid membrane. Functionally, produces ATP from ADP in the presence of a proton gradient across the membrane. The gamma chain is believed to be important in regulating ATPase activity and the flow of protons through the CF(0) complex. The complex from the organism is particularly stable to disruption and remains functional after 6 hrs at 55 degrees Celsius. This is ATP synthase gamma chain from Thermosynechococcus vestitus (strain NIES-2133 / IAM M-273 / BP-1).